The primary structure comprises 466 residues: Gamma-glutamylpolyamine synthetase GlnA3 (466 aa).

Residues 127-466 enclose the GS catalytic domain; sequence GRTVLRRIVA…GVAAAYRWKY (340 aa). Residues Glu-151 and Glu-153 each contribute to the Mg(2+) site. Residue Glu-202 participates in ATP binding. Mg(2+) contacts are provided by Glu-207 and Glu-214. Gly-259 lines the L-glutamate pocket. His-263 contacts Mg(2+). Residue Ser-267 participates in ATP binding. 2 residues coordinate L-glutamate: Arg-316 and Arg-334. Residues Arg-334 and Arg-339 each contribute to the ATP site. Residue Glu-355 coordinates Mg(2+).

This sequence belongs to the glutamine synthetase family. Mg(2+) serves as cofactor. In terms of tissue distribution, expressed in mycelium.

It catalyses the reaction spermine + L-glutamate + ATP = gamma-L-glutamylspermine + ADP + phosphate + H(+). It carries out the reaction spermidine + L-glutamate + ATP = gamma-L-glutamylspermidine + ADP + phosphate + H(+). The enzyme catalyses putrescine + L-glutamate + ATP = gamma-L-glutamylputrescine + ADP + phosphate + H(+). The catalysed reaction is cadaverine + L-glutamate + ATP = gamma-L-glutamylcadaverine + ADP + phosphate + H(+). Its pathway is amine and polyamine degradation; putrescine degradation. It participates in amine and polyamine degradation; spermidine degradation. The protein operates within amine and polyamine degradation; spermine degradation. Functionally, involved in the catabolism of polyamines. Catalyzes the ATP-dependent gamma-glutamylation of polyamines. Substrates include putrescine, cadaverine, spermidine and spermine, with a preference for long-chain polyamines spermidine and spermine. Is not able to compensate for the loss of glutamine synthetases (GSs). No complementation of the L-glutamine auxotrophy of an E.coli glnA mutant. Involved in morphological differentiation and in the production of secondary metabolites. Together with GlnA2, enables survival of S.coelicolor under exposure to high local environmental polyamine concentrations, which is toxic to the cells. The chain is Gamma-glutamylpolyamine synthetase GlnA3 from Streptomyces coelicolor (strain ATCC BAA-471 / A3(2) / M145).